The chain runs to 330 residues: Phenylalanine--tRNA ligase alpha subunit (330 aa).

Glu255 serves as a coordination point for Mg(2+).

The protein belongs to the class-II aminoacyl-tRNA synthetase family. Phe-tRNA synthetase alpha subunit type 1 subfamily. Tetramer of two alpha and two beta subunits. Requires Mg(2+) as cofactor.

The protein localises to the cytoplasm. It carries out the reaction tRNA(Phe) + L-phenylalanine + ATP = L-phenylalanyl-tRNA(Phe) + AMP + diphosphate + H(+). In Acinetobacter baumannii (strain SDF), this protein is Phenylalanine--tRNA ligase alpha subunit.